We begin with the raw amino-acid sequence, 466 residues long: Vacuolar-processing enzyme delta-isozyme (466 aa).

The signal sequence occupies residues M1–S24. N137 is a glycosylation site (N-linked (GlcNAc...) asparagine). The active site involves H164. C206 acts as the Nucleophile in catalysis. Residues C239 and C253 are joined by a disulfide bond. An N-linked (GlcNAc...) asparagine glycan is attached at N322. 2 disulfide bridges follow: C417–C447 and C429–C464.

It belongs to the peptidase C13 family. In terms of processing, auto-catalytic activation. Seed specific. Restricted to developing seeds at 7 days after anthesis, and, at lower levels, detected in flowers. Detected in siliques, specifically in seed coats (at protein level).

The protein localises to the secreted. It is found in the extracellular space. The protein resides in the cell wall. It localises to the vacuole. It carries out the reaction Hydrolysis of proteins and small molecule substrates at -Asn-|-Xaa- bonds.. With respect to regulation, strongly inhibited by biotin-YVAD-fmk (a caspase-1 inhibitor) and by Ac-DEVD-fmk. In terms of biological role, asparagine-specific endopeptidase that may be involved in processing of proteins targeted to vacuoles. Probably involved in post-translational proteolysis of seed storage proteins in the protein storage vacuole of developing seeds. Exhibits a caspase-1-like activity in extracellular granules. At the early stage of seed development, required for the formation of the seed coat, by regulating cell death of specific cell layers in inner integument. In Arabidopsis thaliana (Mouse-ear cress), this protein is Vacuolar-processing enzyme delta-isozyme.